Here is a 159-residue protein sequence, read N- to C-terminus: 18.0 kDa class I heat shock protein (159 aa).

In terms of domain architecture, sHSP spans 45-159; sequence ETAAFANTHI…PEVKSIHISG (115 aa).

This sequence belongs to the small heat shock protein (HSP20) family. In terms of assembly, forms oligomeric structures.

It localises to the cytoplasm. The sequence is that of 18.0 kDa class I heat shock protein from Daucus carota (Wild carrot).